Consider the following 524-residue polypeptide: Bifunctional purine biosynthesis protein PurH (524 aa).

One can recognise an MGS-like domain in the interval 1–149 (MSDPVIKRAL…KNNESVTVVT (149 aa)).

Belongs to the PurH family.

The enzyme catalyses (6R)-10-formyltetrahydrofolate + 5-amino-1-(5-phospho-beta-D-ribosyl)imidazole-4-carboxamide = 5-formamido-1-(5-phospho-D-ribosyl)imidazole-4-carboxamide + (6S)-5,6,7,8-tetrahydrofolate. The catalysed reaction is IMP + H2O = 5-formamido-1-(5-phospho-D-ribosyl)imidazole-4-carboxamide. It participates in purine metabolism; IMP biosynthesis via de novo pathway; 5-formamido-1-(5-phospho-D-ribosyl)imidazole-4-carboxamide from 5-amino-1-(5-phospho-D-ribosyl)imidazole-4-carboxamide (10-formyl THF route): step 1/1. Its pathway is purine metabolism; IMP biosynthesis via de novo pathway; IMP from 5-formamido-1-(5-phospho-D-ribosyl)imidazole-4-carboxamide: step 1/1. The polypeptide is Bifunctional purine biosynthesis protein PurH (Chlorobium chlorochromatii (strain CaD3)).